Here is a 355-residue protein sequence, read N- to C-terminus: Trans-enoyl reductase (355 aa).

Position 45–48 (45–48) interacts with NADP(+); sequence VDTK. 131–138 is a binding site for substrate; it reads ISFMTTGL. Residues 166-169, 189-192, Y207, and 254-255 each bind NADP(+); these read SSAT, SPRN, and LE. Position 275 to 279 (275 to 279) interacts with substrate; it reads GPQML. Residue 344 to 345 coordinates NADP(+); sequence IS.

Belongs to the zinc-containing alcohol dehydrogenase family. As to quaternary structure, monomer.

It catalyses the reaction L-serine + 7 malonyl-CoA + acetyl-CoA + 2 S-adenosyl-L-methionine + ATP + 8 NADPH + 11 H(+) = (5S)-3-[(2E,6R,8E,10E,12E)-2,6-dimethyltetradeca-2,8,10,12-tetraenoyl]-5-(hydroxymethyl)pyrrolidine-2,4-dione + AMP + 2 S-adenosyl-L-homocysteine + 7 CO2 + diphosphate + 8 NADP(+) + 8 CoA + 6 H2O. It functions in the pathway mycotoxin biosynthesis. Its function is as follows. Hybrid PKS-NRPS synthetase; part of the gene cluster that mediates the biosynthesis of trichosetin, a trans-fused decalin-containing tetramic acid with antimicrobial activity. The PKS module of PKS-NRPS1 together with the enoylreductase (ER) catalyze the formation of the polyketide unit which is then conjugated to L-serine by the condensation domain of the PKS-NRPS1 NRPS module. Activity of the Dieckmann cyclase domain (RED) results in release of the Dieckmann product intermediate. Diels-Alderase (DA) is involved in endo-selective Diels-Alder cycloaddition to form the decalin ring, leading to the production of N-desmethylequisetin also called trichosetin. The cluster does not contain the equisetin N-methyltransferase and consequently, trichosetin is isolated as final product. This chain is Trans-enoyl reductase, found in Gibberella fujikuroi (strain CBS 195.34 / IMI 58289 / NRRL A-6831) (Bakanae and foot rot disease fungus).